Consider the following 756-residue polypeptide: Probable cleavage and polyadenylation specificity factor subunit 2 (756 aa).

Thr-221 and Thr-226 each carry phosphothreonine.

This sequence belongs to the metallo-beta-lactamase superfamily. RNA-metabolizing metallo-beta-lactamase-like family. CPSF2/YSH1 subfamily. In terms of assembly, component of the cleavage and polyadenylation specificity factor (CPSF) complex, composed of at least Clp, Cpsf73, Cpsf100 and Cpsf160. Interacts with Sym and Cpsf73 forming a core cleavage factor required for both polyadenylated and histone mRNA processing. Interacts with Slbp and Lsm11.

It localises to the nucleus. In terms of biological role, component of the cleavage and polyadenylation specificity factor (CPSF) complex that plays a key role in pre-mRNA 3'-end formation, recognizing the AAUAAA signal sequence and interacting with poly(A) polymerase and other factors to bring about cleavage and poly(A) addition. Required for the cotranscriptional processing of 3'-ends of polyadenylated and histone pre-mRNA. The sequence is that of Probable cleavage and polyadenylation specificity factor subunit 2 (Cpsf100) from Drosophila melanogaster (Fruit fly).